Here is a 156-residue protein sequence, read N- to C-terminus: Ribosomal RNA large subunit methyltransferase H (156 aa).

Residues Gly104 and 123–128 (LSALTL) each bind S-adenosyl-L-methionine.

It belongs to the RNA methyltransferase RlmH family. In terms of assembly, homodimer.

The protein localises to the cytoplasm. The enzyme catalyses pseudouridine(1915) in 23S rRNA + S-adenosyl-L-methionine = N(3)-methylpseudouridine(1915) in 23S rRNA + S-adenosyl-L-homocysteine + H(+). Its function is as follows. Specifically methylates the pseudouridine at position 1915 (m3Psi1915) in 23S rRNA. The chain is Ribosomal RNA large subunit methyltransferase H from Nitrosospira multiformis (strain ATCC 25196 / NCIMB 11849 / C 71).